Reading from the N-terminus, the 193-residue chain is Potassium-transporting ATPase KdpC subunit (193 aa).

A helical membrane pass occupies residues 7 to 27; that stretch reads PALVLFALLSALTGLAYPLAV.

Belongs to the KdpC family. As to quaternary structure, the system is composed of three essential subunits: KdpA, KdpB and KdpC.

The protein localises to the cell inner membrane. Functionally, part of the high-affinity ATP-driven potassium transport (or Kdp) system, which catalyzes the hydrolysis of ATP coupled with the electrogenic transport of potassium into the cytoplasm. This subunit acts as a catalytic chaperone that increases the ATP-binding affinity of the ATP-hydrolyzing subunit KdpB by the formation of a transient KdpB/KdpC/ATP ternary complex. The sequence is that of Potassium-transporting ATPase KdpC subunit from Variovorax paradoxus (strain S110).